The primary structure comprises 100 residues: Urease subunit gamma (100 aa).

This sequence belongs to the urease gamma subunit family. In terms of assembly, heterotrimer of UreA (gamma), UreB (beta) and UreC (alpha) subunits. Three heterotrimers associate to form the active enzyme.

The protein resides in the cytoplasm. The catalysed reaction is urea + 2 H2O + H(+) = hydrogencarbonate + 2 NH4(+). It participates in nitrogen metabolism; urea degradation; CO(2) and NH(3) from urea (urease route): step 1/1. The sequence is that of Urease subunit gamma from Synechococcus sp. (strain CC9605).